A 301-amino-acid chain; its full sequence is ATP synthase gamma chain (301 aa).

Belongs to the ATPase gamma chain family. F-type ATPases have 2 components, CF(1) - the catalytic core - and CF(0) - the membrane proton channel. CF(1) has five subunits: alpha(3), beta(3), gamma(1), delta(1), epsilon(1). CF(0) has three main subunits: a, b and c.

The protein localises to the cell inner membrane. In terms of biological role, produces ATP from ADP in the presence of a proton gradient across the membrane. The gamma chain is believed to be important in regulating ATPase activity and the flow of protons through the CF(0) complex. The polypeptide is ATP synthase gamma chain (Helicobacter pylori (strain J99 / ATCC 700824) (Campylobacter pylori J99)).